The primary structure comprises 638 residues: MPVITLPDGSTRHYEQSLSVLDVALDIHPRLAKSCIAGRFNDQLIDACDLLSVDGKLQIITPSDGEAVEIIRHSCAHLLGHAVKQLWPETKMAIGPVIENGFYYDLDIESPLTQEDLELLEKRMHELAHKNYTVIKKKVSWQKARDTFSKRGESYKIAILDENIDSSDQPNLYFHEEYIDMCRGPHVPNMSFCHYFKLQKTSGAYWRGDSKNKTLQRVYGTAWSDKKQLDAYLNRLEEATKRDHRKIGKTQDLYHFQEEAPGMVFWHENGWIVFRELEILIREKLKEYEYQEVKGPFMMDRVLWEKTGHWENYSENMFTTLSENREYCIKPMNCPGHLEIFKQGLKSYRDLPLRMAEFGSCHRNEPSGALHGLMRVRGFTQDDAHIFCTEKQVRKEVSNCIKMTYDIYQTFGFKKIAVKLSTRPEKRIGSDEIWTQAEEDLASVLKEQGITFELQPGEGAFYGPKIEFTLYDCLDRAWQCGTVQLDFSLPVRLNAFYIDENSERQVPVMIHRAILGSIERFIGILTEEYAGFFPVWLAPVQVMLINITEKQSDYVKKVAKNLQQLGVRAKVDLRNEKIGFKIRQHTLYRIPYILVCGDKEVESNQIAVRTHSGKDLGSFSVNVFADKLLEEISSRCLH.

Positions 1–61 constitute a TGS domain; sequence MPVITLPDGS…SVDGKLQIIT (61 aa). The catalytic stretch occupies residues 243–534; that stretch reads DHRKIGKTQD…LTEEYAGFFP (292 aa). The Zn(2+) site is built by Cys-334, His-385, and His-511.

Belongs to the class-II aminoacyl-tRNA synthetase family. As to quaternary structure, homodimer. Zn(2+) serves as cofactor.

The protein resides in the cytoplasm. It catalyses the reaction tRNA(Thr) + L-threonine + ATP = L-threonyl-tRNA(Thr) + AMP + diphosphate + H(+). In terms of biological role, catalyzes the attachment of threonine to tRNA(Thr) in a two-step reaction: L-threonine is first activated by ATP to form Thr-AMP and then transferred to the acceptor end of tRNA(Thr). Also edits incorrectly charged L-seryl-tRNA(Thr). The protein is Threonine--tRNA ligase of Hamiltonella defensa subsp. Acyrthosiphon pisum (strain 5AT).